A 674-amino-acid chain; its full sequence is MGQDSNGIEFHQKRHGLLKDQVQLVKRRDSIRYEIVSIQDRLSFEKGFFAVIRACQLLSQKNDGIILVGVAGPSGAGKTVFTEKILNFLPSVAVISMDNYNDSSRIVDGNFDDPRLTDYDTLLKNLEDLKEGKQVEVPIYDFKSSSRVGYRTLDVPPSRIVIIEGIYALSEKLRPLLDLRVSVTGGVHFDLVKRVLRDIQRAGQQPEEIIHQISETVYPMYKAFIEPDLQTAQIKIINKFNPFTGFQSPTYILKSRKEVSVDQIKAVLSDGHTETKEETYDIYLLPPGEDPESCQSYLRMRNKDGKYSLMFEEWVTDTPFVISPRITFEVSVRLLGGLMALGYTIATILKRNSHVFATDKVFVKIDWLEQLNRHYMQVQGKDRQLVQSTAEQLGLEGSFIPRTYIEQIQLEKLINEVMALPDDLKNKLSLDEDLVSSSSPKEALLRASADRVAMRNKNLKRGMSHSYSTQRDKNLSKLAGYSSSDRRYEERNHDSPANEGFMTLLSEQISSLNERMDEFTSRIEELNSKLSCNKNSPTQQSLSIQTEVCNGSAPTSYFISGLDNGCLTNSIMPHSSSSSQLAKDSPLMEEISTISRGQRQVMHQLDNLCNLMRESSAERSRLARTGSSNSGNRGRSSKSSFLSNVESNKLPLVLTVAICSIGIIVIKSYINKRQ.

Residues 248-410 (SPTYILKSRK…PRTYIEQIQL (163 aa)) form the CYTH domain. Disordered regions lie at residues 457–498 (KNLK…SPAN) and 619–640 (RSRL…SKSS). The span at 484–496 (SDRRYEERNHDSP) shows a compositional bias: basic and acidic residues. Positions 623–640 (ARTGSSNSGNRGRSSKSS) are enriched in low complexity. Residues 650–670 (LPLVLTVAICSIGIIVIKSYI) form a helical membrane-spanning segment.

It depends on Mg(2+) as a cofactor. In terms of tissue distribution, predominantly expressed in the shoot apices of inflorescences.

The protein localises to the mitochondrion outer membrane. It catalyses the reaction diphosphate + H2O = 2 phosphate + H(+). Its function is as follows. Exhibits pyrophosphatase activity with stronger affinity for pyrophosphate (PPi), moderate affinity for ATP and ADP, and weak affinity for tripolyphosphate (PPPi). No activity observed toward uridine substrate. Negative regulator of the salicylic acid (SA)-mediated amplification of defense responses against both virulent and avirulent pathogens, including oomycetes (e.g. H.arabidopsidis) and bacteria (e.g. P.syringae). Represses systemic acquired resistance (SAR). This is Inorganic pyrophosphatase TTM2 from Arabidopsis thaliana (Mouse-ear cress).